The chain runs to 478 residues: MTLSLYNTLTRQKQRFEPLQAGSVSLYCCGVTVYDYCHLGHARSYIVWDTLRRYLLWLGYRVRYVQNFTDIDDKILRRSRQEGTTMQAIADRYTQAYFEDMARLNILEADDYPRATHTLDGIQRLIAELEDKGFAYAADGDVYFSVRRFQDYGKLSGRKLEDLKAGASGRVESAEESLKHDPFDFALWKAAKPEEPAWDSPWGPGRPGWHIECSAMVRDRLGDSIDIHVGGADLVFPHHENEIAQSEAVTGHPLARYWLHNGMVNVGGEKMSKSLGNFTTIRQLLDEGGISPMVLRLFVLQANYRKPIDFTDEALQACQNGWETLQEGLHFGEHWGDRLGWTESVTVDPDLSDRFRMAMDDDLNTPAALAVLFELAKELRRQQNLLIHEGHLDGDAQQLHQHWVTLVQLAGVLGLEAEPELAETNELDEAAIEDWIAKRHAARQAKDFAEADRIRHYLADLGITLIDQAGGITRWSRT.

Cys-29 provides a ligand contact to Zn(2+). The short motif at 31–41 (VTVYDYCHLGH) is the 'HIGH' region element. Zn(2+)-binding residues include Cys-213, His-238, and Glu-242. Positions 270–274 (KMSKS) match the 'KMSKS' region motif. Lys-273 contacts ATP.

It belongs to the class-I aminoacyl-tRNA synthetase family. As to quaternary structure, monomer. Requires Zn(2+) as cofactor.

Its subcellular location is the cytoplasm. It carries out the reaction tRNA(Cys) + L-cysteine + ATP = L-cysteinyl-tRNA(Cys) + AMP + diphosphate. This chain is Cysteine--tRNA ligase, found in Synechococcus sp. (strain ATCC 27144 / PCC 6301 / SAUG 1402/1) (Anacystis nidulans).